Consider the following 704-residue polypeptide: mRNA (2'-O-methyladenosine-N(6)-)-methyltransferase (704 aa).

Residues 1–33 (MANENHGSPREEASLLSHSPGTSNQSQPCSPKP) form a disordered region. Polar residues predominate over residues 16-29 (LSHSPGTSNQSQPC). Ser30 carries the post-translational modification Phosphoserine. The WW domain maps to 43-77 (ELVHAGWEKCWSRRENRPYYFNRFTNQSLWEMPVL). Residues 88 to 151 (GLNATPLPQD…PSSPSIPGTP (64 aa)) form a disordered region. The Nuclear localization signal motif lies at 109–113 (KPRKR). Ser116 is subject to Phosphoserine. Positions 136 to 149 (PTGQSVPSSPSIPG) are enriched in polar residues. Residue Thr152 is modified to Phosphothreonine. Substrate-binding residues include Arg235 and Arg265. S-adenosyl-L-methionine is bound at residue 553–556 (NPPF). Substrate is bound by residues Glu558 and 588–592 (WREPP). 614-616 (FEH) provides a ligand contact to S-adenosyl-L-methionine. The tract at residues 663–704 (LSAAYRQSGRSHSSGSSSSSSSEAKDRDSGREQGPSREPHPT) is disordered. The short motif at 669 to 684 (QSGRSHSSGSSSSSSS) is the Nuclear localization signal element. Over residues 670–684 (SGRSHSSGSSSSSSS) the composition is skewed to low complexity. Over residues 685-704 (EAKDRDSGREQGPSREPHPT) the composition is skewed to basic and acidic residues.

It belongs to the CAPAM family. As to quaternary structure, interacts with POLR2A; interacts with the phosphorylated C-terminal domain (CTD) of POLR2A. Ubiquitous.

It localises to the nucleus. It carries out the reaction a 5'-end (N(7)-methyl 5'-triphosphoguanosine)-(2'-O-methyladenosine) in mRNA + S-adenosyl-L-methionine = a 5'-end (N(7)-methyl 5'-triphosphoguanosine)-(N(6),2'-O-dimethyladenosine) in mRNA + S-adenosyl-L-homocysteine + H(+). Its activity is regulated as follows. Cap-specific adenosine methyltransferase activity is inhibited by zinc. Its function is as follows. Cap-specific adenosine methyltransferase that catalyzes formation of N(6),2'-O-dimethyladenosine cap (m6A(m)) by methylating the adenosine at the second transcribed position of capped mRNAs. Recruited to the early elongation complex of RNA polymerase II (RNAPII) via interaction with POLR2A and mediates formation of m6A(m) co-transcriptionally. The chain is mRNA (2'-O-methyladenosine-N(6)-)-methyltransferase from Homo sapiens (Human).